The primary structure comprises 414 residues: uncharacterized protein (414 aa).

This sequence belongs to the UbiH/COQ6 family. Requires FAD as cofactor.

This is an uncharacterized protein from Synechocystis sp. (strain ATCC 27184 / PCC 6803 / Kazusa).